The sequence spans 396 residues: MGALDDLRVLDLTQVLAGPYCTMLLADMGADVVKVERPGGDLIRSNPPFVSDGDEEAYGGYFQSVNRGKRSLELDLGTDEDREAFLSLVERADVVVENFKAGTMEKFDCGYETLREHNPDLIYSSIRGFGDPRTGETHRQGQPSFDLIAQALGGVMEITGQSDGPPTKVGPGVGDLFTAVLNAVGILAAVHHRERTGEGQYVDTAMYDSMVSLCERTVYQYSCDGESPTRQGNSHPTLFPYDSFEAADGHVVIAAFADGHWETLCEAMERPDLAADYPDAGSRIANRESLRREIADWTATIDSETLLDLLEGRVPAAPVQNTADIFDDPHIHDREMLTDVDQPGADEQITIAGSPIKMTETMPSPGGRAPLLDEHRAELLDEAGVGTGTNRVESDD.

The active-site Nucleophile is the aspartate 175.

Belongs to the CoA-transferase III family. In terms of assembly, homodimer.

The enzyme catalyses mesaconate + succinyl-CoA = 2-methylfumaryl-CoA + succinate. Shows highest activity at 4 M KCl. Does not require divalent ions for activity. Involved in the methylaspartate cycle. Catalyzes the transfer of the CoA moiety from succinyl-CoA to mesaconate to generate mesaconyl-CoA (2-methylfumaryl-CoA) and succinate. Also shows high activity with methylsuccinate as CoA-acceptor, and only low activity with glutarate, acrylate and itaconate. Cannot use other CoA donors like acetyl-CoA, propionyl-CoA, butyryl-CoA or acetoacetyl-CoA. This is Succinyl-CoA:mesaconate CoA-transferase from Haloarcula hispanica (strain ATCC 33960 / DSM 4426 / JCM 8911 / NBRC 102182 / NCIMB 2187 / VKM B-1755).